Reading from the N-terminus, the 388-residue chain is Methylthioribose-1-phosphate isomerase (388 aa).

The active-site Proton donor is the aspartate 253.

This sequence belongs to the eIF-2B alpha/beta/delta subunits family. MtnA subfamily.

It localises to the cytoplasm. The protein resides in the nucleus. The catalysed reaction is 5-(methylsulfanyl)-alpha-D-ribose 1-phosphate = 5-(methylsulfanyl)-D-ribulose 1-phosphate. It participates in amino-acid biosynthesis; L-methionine biosynthesis via salvage pathway; L-methionine from S-methyl-5-thio-alpha-D-ribose 1-phosphate: step 1/6. In terms of biological role, catalyzes the interconversion of methylthioribose-1-phosphate (MTR-1-P) into methylthioribulose-1-phosphate (MTRu-1-P). The polypeptide is Methylthioribose-1-phosphate isomerase (Fusarium vanettenii (strain ATCC MYA-4622 / CBS 123669 / FGSC 9596 / NRRL 45880 / 77-13-4) (Fusarium solani subsp. pisi)).